The chain runs to 80 residues: Protein P9 (80 aa).

Self-associates.

This chain is Protein P9, found in Beta vulgaris (Sugar beet).